We begin with the raw amino-acid sequence, 292 residues long: MSERYPIIAITGSSGAGTTSVTRTFENIFCREGVKSVVIEGDSFHRYDRAEMKVKMAEAERTGNMNFSHFGAENNLFGDLESLFRSYAESGTGMRRRYLHSTEEAAPFGQQPGTFTAWEPLPADTDLLFYEGLHGGVVTDEVNVAQYPNLLIGVVPVINLEWIQKLWRDKKQRGYSTEAVTDTILRRMPDYVNYICPQFSRTHVNFQRVPCVDTSNPFISREIPAPDESMVVIRFANPKGIDFQYLLSMIHDSFMSRANTIVVPGGKMELAMQLIFTPFVLRMMERRKRAAL.

ATP is bound at residue 12 to 20 (GSSGAGTTS).

This sequence belongs to the phosphoribulokinase family. As to quaternary structure, homooctamer.

The enzyme catalyses D-ribulose 5-phosphate + ATP = D-ribulose 1,5-bisphosphate + ADP + H(+). It participates in carbohydrate biosynthesis; Calvin cycle. The protein is Phosphoribulokinase, plasmid (cfxP) of Cupriavidus necator (strain ATCC 17699 / DSM 428 / KCTC 22496 / NCIMB 10442 / H16 / Stanier 337) (Ralstonia eutropha).